Consider the following 317-residue polypeptide: Ribonuclease Z (317 aa).

7 residues coordinate Zn(2+): His61, His63, Asp65, His66, His153, Asp221, and His280. Asp65 serves as the catalytic Proton acceptor.

It belongs to the RNase Z family. As to quaternary structure, homodimer. The cofactor is Zn(2+).

It carries out the reaction Endonucleolytic cleavage of RNA, removing extra 3' nucleotides from tRNA precursor, generating 3' termini of tRNAs. A 3'-hydroxy group is left at the tRNA terminus and a 5'-phosphoryl group is left at the trailer molecule.. Zinc phosphodiesterase, which displays some tRNA 3'-processing endonuclease activity. Probably involved in tRNA maturation, by removing a 3'-trailer from precursor tRNA. In Alkaliphilus oremlandii (strain OhILAs) (Clostridium oremlandii (strain OhILAs)), this protein is Ribonuclease Z.